The sequence spans 392 residues: MTKEEKTLKEYIFTSESVTEGHPDKMADQISDAILDYIIEHDPSAHVACETLVSNGFCVIAGELKTTAYAPMQEIVRRVVQEIGYTDATYGFDYRSAAVLNGIGEQSPDITQGVTLLDGEIGAGDQGLMFGYACRETDVLMPLPIYLAHLLTRRLAEVRKEGIIPYLRPDGKAQISVKYIGDKPVSVEAVVVSTQHAPEVSQEKIREDVIRDVIRAVIPAELMSEKTLFHINPTGKFVIGGPQGDAGLTGRKIIVDTYGGSCPHGGGAFSGKDPTKVDRSAAYACRHVAKNLVAAGVCDRVTIQIAYAIGISAPVSIMIDTHNTAIVEEKKIESCVKELFDLTPKGIIKSLDLLRPIYRKTAVYGHFGREEEGFTWELTNRVEDIKKYLKIN.

Residue histidine 22 coordinates ATP. Aspartate 24 is a Mg(2+) binding site. Glutamate 50 is a binding site for K(+). L-methionine-binding residues include glutamate 63 and glutamine 106. The tract at residues 106–116 (QSPDITQGVTL) is flexible loop. ATP-binding positions include 170 to 172 (DGK), 236 to 237 (KF), aspartate 245, 251 to 252 (RK), alanine 268, and lysine 272. Position 245 (aspartate 245) interacts with L-methionine. Position 276 (lysine 276) interacts with L-methionine.

This sequence belongs to the AdoMet synthase family. Homotetramer; dimer of dimers. Mg(2+) serves as cofactor. The cofactor is K(+).

It localises to the cytoplasm. It carries out the reaction L-methionine + ATP + H2O = S-adenosyl-L-methionine + phosphate + diphosphate. It functions in the pathway amino-acid biosynthesis; S-adenosyl-L-methionine biosynthesis; S-adenosyl-L-methionine from L-methionine: step 1/1. In terms of biological role, catalyzes the formation of S-adenosylmethionine (AdoMet) from methionine and ATP. The overall synthetic reaction is composed of two sequential steps, AdoMet formation and the subsequent tripolyphosphate hydrolysis which occurs prior to release of AdoMet from the enzyme. In Sulfurimonas denitrificans (strain ATCC 33889 / DSM 1251) (Thiomicrospira denitrificans (strain ATCC 33889 / DSM 1251)), this protein is S-adenosylmethionine synthase.